Here is a 224-residue protein sequence, read N- to C-terminus: Octanoyl-[acyl-carrier-protein]:protein N-octanoyltransferase LIPT2, mitochondrial (224 aa).

The 181-residue stretch at 37 to 217 folds into the BPL/LPL catalytic domain; it reads SNIPNTLLLC…AFTEQFNCTL (181 aa). Substrate-binding positions include 81 to 88, 147 to 149, and 160 to 162; these read RGGLITFH, AIG, and GLA. Cys-178 functions as the Acyl-thioester intermediate in the catalytic mechanism.

It belongs to the LipB family.

It is found in the mitochondrion. The enzyme catalyses octanoyl-[ACP] + L-lysyl-[protein] = N(6)-octanoyl-L-lysyl-[protein] + holo-[ACP] + H(+). It participates in protein modification; protein lipoylation via endogenous pathway; protein N(6)-(lipoyl)lysine from octanoyl-[acyl-carrier-protein]: step 1/2. Its function is as follows. Catalyzes the transfer of endogenously produced octanoic acid from octanoyl-acyl-carrier-protein (octanoyl-ACP) onto the lipoyl domains of lipoate-dependent enzymes such as the protein H of the glycine cleavage system (GCSH). Lipoyl-ACP can also act as a substrate although octanoyl-ACP is likely to be the physiological substrate. The chain is Octanoyl-[acyl-carrier-protein]:protein N-octanoyltransferase LIPT2, mitochondrial (lipt2) from Danio rerio (Zebrafish).